Reading from the N-terminus, the 205-residue chain is Glycerol-3-phosphate acyltransferase (205 aa).

Transmembrane regions (helical) follow at residues 4 to 24 (IAPGMILLAYLCGSISSAILV), 80 to 100 (PFWLGLIAIAACLGHIWPIFF), 112 to 132 (FGAIAPIGWDLTGVMAGTWLL), and 138 to 158 (GYSSLGAIVSALVAPFYVWWF).

It belongs to the PlsY family. As to quaternary structure, probably interacts with PlsX.

The protein resides in the cell inner membrane. It carries out the reaction an acyl phosphate + sn-glycerol 3-phosphate = a 1-acyl-sn-glycero-3-phosphate + phosphate. The protein operates within lipid metabolism; phospholipid metabolism. In terms of biological role, catalyzes the transfer of an acyl group from acyl-phosphate (acyl-PO(4)) to glycerol-3-phosphate (G3P) to form lysophosphatidic acid (LPA). This enzyme utilizes acyl-phosphate as fatty acyl donor, but not acyl-CoA or acyl-ACP. This Cronobacter sakazakii (strain ATCC BAA-894) (Enterobacter sakazakii) protein is Glycerol-3-phosphate acyltransferase.